Here is a 249-residue protein sequence, read N- to C-terminus: Probable transcriptional regulatory protein Wbm0670 (249 aa).

Belongs to the TACO1 family.

The protein resides in the cytoplasm. The protein is Probable transcriptional regulatory protein Wbm0670 of Wolbachia sp. subsp. Brugia malayi (strain TRS).